The chain runs to 301 residues: Large ribosomal subunit protein uL4 (301 aa).

The large ribosomal subunit protein uL4 stretch occupies residues 1–223; the sequence is MNETKTIDVL…TQALSAQPEV (223 aa). The interval 49-105 is disordered; it reads QGTHATKTRGQVSGGGKKPWRQKGTGRARQGSTRAPQWVGGGTVHGPQPRSYAQRTP. The segment at 224–301 is unknown; that stretch reads PETNVADQHP…KSDSEKEDAK (78 aa).

The protein belongs to the universal ribosomal protein uL4 family. In terms of assembly, part of the 50S ribosomal subunit.

Functionally, one of the primary rRNA binding proteins, this protein initially binds near the 5'-end of the 23S rRNA. It is important during the early stages of 50S assembly. It makes multiple contacts with different domains of the 23S rRNA in the assembled 50S subunit and ribosome. In terms of biological role, forms part of the polypeptide exit tunnel. The protein is Large ribosomal subunit protein uL4 of Cutibacterium acnes (strain DSM 16379 / KPA171202) (Propionibacterium acnes).